A 98-amino-acid chain; its full sequence is Integration host factor subunit beta (98 aa).

The protein belongs to the bacterial histone-like protein family. In terms of assembly, heterodimer of an alpha and a beta chain.

This protein is one of the two subunits of integration host factor, a specific DNA-binding protein that functions in genetic recombination as well as in transcriptional and translational control. The protein is Integration host factor subunit beta of Pseudomonas syringae pv. tomato (strain ATCC BAA-871 / DC3000).